A 71-amino-acid polypeptide reads, in one-letter code: MPSASGHHQIPAETQRHDDDQTQETAQGLSAAAMLAQEQADDLDAILDDIETVLETNAEEYVSSFVQKGGE.

The segment at 1–30 is disordered; it reads MPSASGHHQIPAETQRHDDDQTQETAQGLS. Residues 23 to 56 adopt a coiled-coil conformation; sequence QETAQGLSAAAMLAQEQADDLDAILDDIETVLET. The interval 27–65 is ARC ATPase binding; the sequence is QGLSAAAMLAQEQADDLDAILDDIETVLETNAEEYVSSF. An Isoglutamyl lysine isopeptide (Glu-Lys) (interchain with K-? in acceptor proteins) cross-link involves residue Glu71.

Belongs to the prokaryotic ubiquitin-like protein family. In terms of assembly, strongly interacts with the proteasome-associated ATPase ARC through a hydrophobic interface; the interacting region of Pup lies in its C-terminal half. There is one Pup binding site per ARC hexamer ring.

It functions in the pathway protein degradation; proteasomal Pup-dependent pathway. Functionally, protein modifier that is covalently attached to lysine residues of substrate proteins, thereby targeting them for proteasomal degradation. The tagging system is termed pupylation. This is Prokaryotic ubiquitin-like protein Pup from Bifidobacterium animalis subsp. lactis (strain AD011).